Consider the following 140-residue polypeptide: UPF0102 protein Ppro_1186 (140 aa).

The interval 1-27 (MKRPGDGRQESPSSTARPDNRNTGSRG) is disordered. Polar residues predominate over residues 10–25 (ESPSSTARPDNRNTGS).

The protein belongs to the UPF0102 family.

This Pelobacter propionicus (strain DSM 2379 / NBRC 103807 / OttBd1) protein is UPF0102 protein Ppro_1186.